Consider the following 81-residue polypeptide: Protein RALF-like 6 (81 aa).

The first 29 residues, 1–29, serve as a signal peptide directing secretion; that stretch reads MAAHKKSHIRIFFVSVMIILSLFSGFGEG. 2 disulfides stabilise this stretch: cysteine 46–cysteine 54 and cysteine 66–cysteine 72.

Belongs to the plant rapid alkalinization factor (RALF) family.

The protein localises to the secreted. Its function is as follows. Cell signaling peptide that may regulate plant stress, growth, and development. Mediates a rapid alkalinization of extracellular space by mediating a transient increase in the cytoplasmic Ca(2+) concentration leading to a calcium-dependent signaling events through a cell surface receptor and a concomitant activation of some intracellular mitogen-activated protein kinases. The sequence is that of Protein RALF-like 6 (RALFL6) from Arabidopsis thaliana (Mouse-ear cress).